A 580-amino-acid chain; its full sequence is Viral transcription factor IE2 (580 aa).

The segment covering 1–11 (MESSAKRKMDP) has biased composition (basic and acidic residues). Disordered stretches follow at residues 1 to 30 (MESS…TPVT) and 99 to 161 (DSSS…VIIK). Residues 99 to 133 (DSSSTGPTLTTHSCSVSSAPLNKPTPTSVAVTNTP) show a composition bias toward polar residues. Glycyl lysine isopeptide (Lys-Gly) (interchain with G-Cter in SUMO) cross-links involve residues K175 and K180. The SUMO-interacting motif 1/SIM1 signature appears at 199–202 (CIVI). 2 positions are modified to phosphoserine; by host CK2: S203 and S205. The segment at 206–335 (EEEQGEEVET…KSKRISELDN (130 aa)) is disordered. Low complexity-rich tracts occupy residues 216 to 236 (RGAT…TSPT), 259 to 271 (SSSS…SASD), and 302 to 317 (AASS…SSGG). The SUMO-interacting motif 1/SIM2 signature appears at 410 to 413 (IQII). Positions 501–504 (VDLL) match the SUMO-interacting motif 1/SIM3 motif.

Belongs to the HHV-5 IE2 protein family. In terms of assembly, interacts with host SUMO-modified form of TATA-binding protein (TBP)-associated factor 12/TAF12 in a SIM-dependent manner; this interaction increases the transactivation activity of IE2. Interacts with host CHAF1A. Interacts with several components of the host transcriptional machinery including TBP, TF2B and CREB1. Interacts with host DNA replication licensing factor MCM3. Interacts with host PLSCR1; this interaction inhibits IE2 transactivating activity. Phosphorylated by host CK2 at Ser-203 and Ser-205; leading to enhanced SUMOylation. In terms of processing, SUMOylated; SUMOylation is enhanced when IE2 is phosphorylated by host CK2. The sumoylation is necessary for efficient replication of the virus and thus for the function of this viral transcription factor.

It localises to the host nucleus. Functionally, stimulates viral early and late gene expression and thus play a crucial role in the regulation of productive infection. Selectively drives host RNA Pol II transcription initiation at a subset of viral early-late and late promoters without substantially affecting Pol II transcription of expressed host genes. Mechanistically, forms a repressive complex at the major immediate-early promoter region involving direct association with host nucleosomes and TBP. Concerning activation, stimulates transcription by binding nearby, but not within, core promoter regions. In addition, activates quiescent cells to reenter the cell cycle and up-regulates several E2F-responsive genes, which are responsible for pushing the cell into S phase. In S-phase, inhibits cellular DNA synthesis and blocks further cell cycle progression. In Human cytomegalovirus (strain AD169) (HHV-5), this protein is Viral transcription factor IE2 (UL122).